The chain runs to 361 residues: Phenylalanine 4-monooxygenase, chloroplastic (361 aa).

The N-terminal 55 residues, 1-55, are a transit peptide targeting the chloroplast; sequence MLALRQGALLLSARGGQTTHDNLQLCAGPSRRPRARWISSAPRPSTLVERHIRPQ. Residues 47-67 form a disordered region; that stretch reads LVERHIRPQASTASDATTSTS. A compositionally biased stretch (low complexity) spans 56–67; that stretch reads ASTASDATTSTS. Fe cation is bound by residues His227, His232, and Glu272.

Belongs to the biopterin-dependent aromatic amino acid hydroxylase family. Fe(2+) is required as a cofactor.

It localises to the plastid. It is found in the chloroplast. The catalysed reaction is (6R)-L-erythro-5,6,7,8-tetrahydrobiopterin + L-phenylalanine + O2 = (4aS,6R)-4a-hydroxy-L-erythro-5,6,7,8-tetrahydrobiopterin + L-tyrosine. Catalyzes the hydroxylation of L-phenylalanine to L-tyrosine. Can functionally complement an Escherichia coli tyrosine auxotroph. In Chlamydomonas reinhardtii (Chlamydomonas smithii), this protein is Phenylalanine 4-monooxygenase, chloroplastic.